Reading from the N-terminus, the 58-residue chain is SPbeta prophage-derived uncharacterized protein YotN (58 aa).

This chain is SPbeta prophage-derived uncharacterized protein YotN (yotN), found in Bacillus subtilis (strain 168).